The primary structure comprises 345 residues: Phosphoribosylformylglycinamidine cyclo-ligase (345 aa).

Belongs to the AIR synthase family.

Its subcellular location is the cytoplasm. The enzyme catalyses 2-formamido-N(1)-(5-O-phospho-beta-D-ribosyl)acetamidine + ATP = 5-amino-1-(5-phospho-beta-D-ribosyl)imidazole + ADP + phosphate + H(+). It functions in the pathway purine metabolism; IMP biosynthesis via de novo pathway; 5-amino-1-(5-phospho-D-ribosyl)imidazole from N(2)-formyl-N(1)-(5-phospho-D-ribosyl)glycinamide: step 2/2. This is Phosphoribosylformylglycinamidine cyclo-ligase from Actinobacillus pleuropneumoniae serotype 5b (strain L20).